The sequence spans 486 residues: Cardiolipin synthase A (486 aa).

A run of 2 helical transmembrane segments spans residues 3–23 (TFYT…IAGV) and 38–58 (MAWL…YLSF). 2 consecutive PLD phosphodiesterase domains span residues 219-246 (MDLR…VDPR) and 399-426 (KDGL…DMRS). Residues His-224, Lys-226, Asp-231, His-404, Lys-406, and Asp-411 contribute to the active site.

It belongs to the phospholipase D family. Cardiolipin synthase subfamily. ClsA sub-subfamily.

It is found in the cell inner membrane. The enzyme catalyses 2 a 1,2-diacyl-sn-glycero-3-phospho-(1'-sn-glycerol) = a cardiolipin + glycerol. Functionally, catalyzes the reversible phosphatidyl group transfer from one phosphatidylglycerol molecule to another to form cardiolipin (CL) (diphosphatidylglycerol) and glycerol. The chain is Cardiolipin synthase A from Pectobacterium atrosepticum (strain SCRI 1043 / ATCC BAA-672) (Erwinia carotovora subsp. atroseptica).